The following is a 182-amino-acid chain: NADH-quinone oxidoreductase subunit B (182 aa).

[4Fe-4S] cluster contacts are provided by C47, C48, C113, and C142.

This sequence belongs to the complex I 20 kDa subunit family. In terms of assembly, NDH-1 is composed of 14 different subunits. Subunits NuoB, C, D, E, F, and G constitute the peripheral sector of the complex. Requires [4Fe-4S] cluster as cofactor.

The protein resides in the cell inner membrane. It catalyses the reaction a quinone + NADH + 5 H(+)(in) = a quinol + NAD(+) + 4 H(+)(out). Its function is as follows. NDH-1 shuttles electrons from NADH, via FMN and iron-sulfur (Fe-S) centers, to quinones in the respiratory chain. The immediate electron acceptor for the enzyme in this species is believed to be ubiquinone. Couples the redox reaction to proton translocation (for every two electrons transferred, four hydrogen ions are translocated across the cytoplasmic membrane), and thus conserves the redox energy in a proton gradient. This is NADH-quinone oxidoreductase subunit B from Anaeromyxobacter dehalogenans (strain 2CP-1 / ATCC BAA-258).